A 242-amino-acid chain; its full sequence is E3 ubiquitin-protein ligase ZNRF2 (242 aa).

The tract at residues 1–141 (MGAKQSGPAA…VGGSPGGPRL (141 aa)) is disordered. Residue glycine 2 is the site of N-myristoyl glycine attachment. Serine 19, serine 21, and serine 25 each carry phosphoserine. Over residues 19–29 (SGSDLPSSSSG) the composition is skewed to low complexity. Residues 30 to 41 (GANGTAGGGGGA) show a composition bias toward gly residues. The span at 59 to 97 (PSASGGAAAAAAAPAAPAAPRSRSLGGAVGSVASGARAA) shows a compositional bias: low complexity. 5 positions are modified to phosphoserine: serine 82, serine 89, serine 113, serine 116, and serine 135. Positions 99–118 (SPFSIPNSSSGPYGSQDSVH) are enriched in polar residues. Serine 145 carries the post-translational modification Phosphoserine; by MTOR. A phosphoserine mark is found at serine 151 and serine 193. The segment at 199 to 240 (CAICLEELQQGDTIARLPCLCIYHKGCIDEWFEVNRSCPEHP) adopts an RING-type; atypical zinc-finger fold.

In terms of assembly, interacts with UBE2N. Interacts with ZNRF1. Interacts (when phosphorylated) with YWHAE. In terms of processing, phosphorylated; leading to binding to YWHAE. Phosphorylated by MTOR at Ser-145 and dephosphorylated by PP6C. Ser-145 phosphorylation stimulates vesicle-to-cytosol translocation. Highly expressed in the brain, with higher expression during development than in adult. Expressed also in mammary glands, testis, colon and kidney.

The protein localises to the endosome membrane. The protein resides in the lysosome membrane. It localises to the presynaptic cell membrane. Its subcellular location is the cytoplasm. The enzyme catalyses S-ubiquitinyl-[E2 ubiquitin-conjugating enzyme]-L-cysteine + [acceptor protein]-L-lysine = [E2 ubiquitin-conjugating enzyme]-L-cysteine + N(6)-ubiquitinyl-[acceptor protein]-L-lysine.. Its pathway is protein modification; protein ubiquitination. E3 ubiquitin-protein ligase that plays a role in the establishment and maintenance of neuronal transmission and plasticity. Ubiquitinates the Na(+)/K(+) ATPase alpha-1 subunit/ATP1A1 and thereby influences its endocytosis and/or degradation. Acts also as a positive regulator of mTORC1 activation by amino acids, which functions upstream of the V-ATPase and of Rag-GTPases. In turn, phosphorylation by mTOR leads to its inhibition via targeting to the cytosol allowing a self-regulating feedback mechanism. This chain is E3 ubiquitin-protein ligase ZNRF2 (ZNRF2), found in Homo sapiens (Human).